The primary structure comprises 474 residues: ATP synthase subunit beta (474 aa).

152 to 159 (GGAGVGKT) contacts ATP.

This sequence belongs to the ATPase alpha/beta chains family. F-type ATPases have 2 components, CF(1) - the catalytic core - and CF(0) - the membrane proton channel. CF(1) has five subunits: alpha(3), beta(3), gamma(1), delta(1), epsilon(1). CF(0) has three main subunits: a(1), b(2) and c(9-12). The alpha and beta chains form an alternating ring which encloses part of the gamma chain. CF(1) is attached to CF(0) by a central stalk formed by the gamma and epsilon chains, while a peripheral stalk is formed by the delta and b chains.

It localises to the cell inner membrane. The catalysed reaction is ATP + H2O + 4 H(+)(in) = ADP + phosphate + 5 H(+)(out). Functionally, produces ATP from ADP in the presence of a proton gradient across the membrane. The catalytic sites are hosted primarily by the beta subunits. This Magnetococcus marinus (strain ATCC BAA-1437 / JCM 17883 / MC-1) protein is ATP synthase subunit beta.